The primary structure comprises 59 residues: Preprotein translocase subunit SecG (59 aa).

At 1 to 35 (MPSSKKKKEDVPIASMAGLVRYYESEKEKVKISPK) the chain is on the cytoplasmic side. The helical transmembrane segment at 36 to 56 (VVVVASIVLIAGVIIASFIIP) threads the bilayer. Over 57–59 (PPL) the chain is Extracellular.

This sequence belongs to the SEC61-beta family. In terms of assembly, component of the protein translocase complex. Heterotrimer consisting of alpha (SecY), beta (SecG) and gamma (SecE) subunits. Can form oligomers of the heterotrimer.

Its subcellular location is the cell membrane. Functionally, involved in protein export. The function of the beta subunit is unknown, but it may be involved in stabilization of the trimeric complex. This chain is Preprotein translocase subunit SecG, found in Sulfolobus acidocaldarius (strain ATCC 33909 / DSM 639 / JCM 8929 / NBRC 15157 / NCIMB 11770).